The sequence spans 209 residues: Large ribosomal subunit protein uL3 (209 aa).

Residues 127–152 are disordered; sequence SGGPSSHGSKFHRHLGSTGQAATPSR. Over residues 143–152 the composition is skewed to polar residues; that stretch reads STGQAATPSR.

It belongs to the universal ribosomal protein uL3 family. As to quaternary structure, part of the 50S ribosomal subunit. Forms a cluster with proteins L14 and L19.

Its function is as follows. One of the primary rRNA binding proteins, it binds directly near the 3'-end of the 23S rRNA, where it nucleates assembly of the 50S subunit. The polypeptide is Large ribosomal subunit protein uL3 (Borrelia hermsii (strain HS1 / DAH)).